Consider the following 695-residue polypeptide: Elongation factor G (695 aa).

The 276-residue stretch at 5 to 280 (SHYRNIGIFA…AVIDFLPSPT (276 aa)) folds into the tr-type G domain. GTP is bound by residues 14 to 21 (AHVDAGKT), 78 to 82 (DTPGH), and 132 to 135 (NKLD). A disordered region spans residues 279-299 (PTEVDPQPLTDEETGEPTGEV).

It belongs to the TRAFAC class translation factor GTPase superfamily. Classic translation factor GTPase family. EF-G/EF-2 subfamily.

It is found in the cytoplasm. Its function is as follows. Catalyzes the GTP-dependent ribosomal translocation step during translation elongation. During this step, the ribosome changes from the pre-translocational (PRE) to the post-translocational (POST) state as the newly formed A-site-bound peptidyl-tRNA and P-site-bound deacylated tRNA move to the P and E sites, respectively. Catalyzes the coordinated movement of the two tRNA molecules, the mRNA and conformational changes in the ribosome. The polypeptide is Elongation factor G (Alteromonas mediterranea (strain DSM 17117 / CIP 110805 / LMG 28347 / Deep ecotype)).